A 416-amino-acid polypeptide reads, in one-letter code: Serine hydroxymethyltransferase (416 aa).

(6S)-5,6,7,8-tetrahydrofolate-binding positions include Leu-118 and 122-124 (GHL). N6-(pyridoxal phosphate)lysine is present on Lys-226. (6S)-5,6,7,8-tetrahydrofolate-binding positions include Glu-242 and 350 to 352 (SPF).

This sequence belongs to the SHMT family. Homodimer. Pyridoxal 5'-phosphate serves as cofactor.

Its subcellular location is the cytoplasm. It catalyses the reaction (6R)-5,10-methylene-5,6,7,8-tetrahydrofolate + glycine + H2O = (6S)-5,6,7,8-tetrahydrofolate + L-serine. It participates in one-carbon metabolism; tetrahydrofolate interconversion. It functions in the pathway amino-acid biosynthesis; glycine biosynthesis; glycine from L-serine: step 1/1. Catalyzes the reversible interconversion of serine and glycine with tetrahydrofolate (THF) serving as the one-carbon carrier. This reaction serves as the major source of one-carbon groups required for the biosynthesis of purines, thymidylate, methionine, and other important biomolecules. Also exhibits THF-independent aldolase activity toward beta-hydroxyamino acids, producing glycine and aldehydes, via a retro-aldol mechanism. This chain is Serine hydroxymethyltransferase, found in Helicobacter hepaticus (strain ATCC 51449 / 3B1).